We begin with the raw amino-acid sequence, 119 residues long: Large ribosomal subunit protein bL20 (119 aa).

This sequence belongs to the bacterial ribosomal protein bL20 family.

In terms of biological role, binds directly to 23S ribosomal RNA and is necessary for the in vitro assembly process of the 50S ribosomal subunit. It is not involved in the protein synthesizing functions of that subunit. This chain is Large ribosomal subunit protein bL20, found in Rhodopseudomonas palustris (strain BisA53).